The primary structure comprises 117 residues: UPF0102 protein RHOS4_03930 (117 aa).

The protein belongs to the UPF0102 family.

This is UPF0102 protein RHOS4_03930 from Cereibacter sphaeroides (strain ATCC 17023 / DSM 158 / JCM 6121 / CCUG 31486 / LMG 2827 / NBRC 12203 / NCIMB 8253 / ATH 2.4.1.) (Rhodobacter sphaeroides).